We begin with the raw amino-acid sequence, 903 residues long: Pentatricopeptide repeat-containing protein At3g02330, mitochondrial (903 aa).

The transit peptide at 1 to 31 (MAESLRLLHMTRSVVSFNRCLTEKISYRRVP) directs the protein to the mitochondrion. PPR repeat units follow at residues 47–81 (STTN…GFRP), 82–112 (TTFV…MPLR), 113–143 (DVVS…MPVR), 144–178 (DVVS…GIEF), 179–213 (DGRT…GCDT), 214–244 (DVVA…IPEK), 245–279 (NSVS…NAGV), 280–314 (SQSI…DFAA), 346–380 (NRQS…GLGF), 381–415 (DEIS…SLSL), 416–446 (DVCV…MRRR), 447–481 (DAVS…RIEP), 482–515 (DEFT…GMAS), 516–550 (NSSV…ANVS), 567–601 (MCVS…GITP), 602–636 (DKFT…ELQS), 637–667 (DVYI…SLRR), 668–702 (DFVT…NIKP), 703–738 (NHVT…GLDP), and 739–769 (QLPH…MPFE). The type E motif stretch occupies residues 774–850 (IWRTLLGVCT…EPGCSWVELK (77 aa)). The segment at 851-881 (DELHVFLVGDKAHPRWEEIYEELGLIYSEMK) is type E(+) motif.

The protein belongs to the PPR family. PCMP-E subfamily. In terms of assembly, interacts with MORF1/RIP8.

The protein resides in the mitochondrion. Involved in C-to-U editing of mitochondrial RNA. Required for RNA editing at 8 sites in 6 different mRNAs in mitochondria. This is Pentatricopeptide repeat-containing protein At3g02330, mitochondrial (PCMP-E90) from Arabidopsis thaliana (Mouse-ear cress).